The sequence spans 133 residues: S-adenosylmethionine decarboxylase proenzyme (133 aa).

The active-site Schiff-base intermediate with substrate; via pyruvic acid is the S64. At S64 the chain carries Pyruvic acid (Ser); by autocatalysis. The active-site Proton acceptor; for processing activity is H69. The active-site Proton donor; for catalytic activity is C84.

It belongs to the prokaryotic AdoMetDC family. Type 1 subfamily. Heterotetramer of two alpha and two beta chains arranged as a dimer of alpha/beta heterodimers. It depends on pyruvate as a cofactor. In terms of processing, is synthesized initially as an inactive proenzyme. Formation of the active enzyme involves a self-maturation process in which the active site pyruvoyl group is generated from an internal serine residue via an autocatalytic post-translational modification. Two non-identical subunits are generated from the proenzyme in this reaction, and the pyruvate is formed at the N-terminus of the alpha chain, which is derived from the carboxyl end of the proenzyme. The post-translation cleavage follows an unusual pathway, termed non-hydrolytic serinolysis, in which the side chain hydroxyl group of the serine supplies its oxygen atom to form the C-terminus of the beta chain, while the remainder of the serine residue undergoes an oxidative deamination to produce ammonia and the pyruvoyl group blocking the N-terminus of the alpha chain.

It catalyses the reaction S-adenosyl-L-methionine + H(+) = S-adenosyl 3-(methylsulfanyl)propylamine + CO2. It functions in the pathway amine and polyamine biosynthesis; S-adenosylmethioninamine biosynthesis; S-adenosylmethioninamine from S-adenosyl-L-methionine: step 1/1. In terms of biological role, catalyzes the decarboxylation of S-adenosylmethionine to S-adenosylmethioninamine (dcAdoMet), the propylamine donor required for the synthesis of the polyamines spermine and spermidine from the diamine putrescine. The polypeptide is S-adenosylmethionine decarboxylase proenzyme (Persephonella marina (strain DSM 14350 / EX-H1)).